Here is a 340-residue protein sequence, read N- to C-terminus: Fructose-1,6-bisphosphatase class 1 (340 aa).

Positions 107, 126, 128, and 129 each coordinate Mg(2+). N215 provides a ligand contact to substrate. E287 contributes to the Mg(2+) binding site.

This sequence belongs to the FBPase class 1 family. Homotetramer. It depends on Mg(2+) as a cofactor.

Its subcellular location is the cytoplasm. The enzyme catalyses beta-D-fructose 1,6-bisphosphate + H2O = beta-D-fructose 6-phosphate + phosphate. Its pathway is carbohydrate biosynthesis; gluconeogenesis. The polypeptide is Fructose-1,6-bisphosphatase class 1 (Brucella suis (strain ATCC 23445 / NCTC 10510)).